Here is an 834-residue protein sequence, read N- to C-terminus: Leucine--tRNA ligase (834 aa).

A 'HIGH' region motif is present at residues proline 36–histidine 46. The short motif at lysine 602 to serine 606 is the 'KMSKS' region element. Residue lysine 605 participates in ATP binding.

Belongs to the class-I aminoacyl-tRNA synthetase family.

Its subcellular location is the cytoplasm. The enzyme catalyses tRNA(Leu) + L-leucine + ATP = L-leucyl-tRNA(Leu) + AMP + diphosphate. This Rickettsia canadensis (strain McKiel) protein is Leucine--tRNA ligase.